We begin with the raw amino-acid sequence, 245 residues long: tRNA1(Val) (adenine(37)-N6)-methyltransferase (245 aa).

This sequence belongs to the methyltransferase superfamily. tRNA (adenine-N(6)-)-methyltransferase family.

Its subcellular location is the cytoplasm. The enzyme catalyses adenosine(37) in tRNA1(Val) + S-adenosyl-L-methionine = N(6)-methyladenosine(37) in tRNA1(Val) + S-adenosyl-L-homocysteine + H(+). In terms of biological role, specifically methylates the adenine in position 37 of tRNA(1)(Val) (anticodon cmo5UAC). The polypeptide is tRNA1(Val) (adenine(37)-N6)-methyltransferase (Enterobacter sp. (strain 638)).